Reading from the N-terminus, the 272-residue chain is Elongation factor Ts (272 aa).

The segment at 76-79 (TDFV) is involved in Mg(2+) ion dislocation from EF-Tu.

It belongs to the EF-Ts family.

The protein localises to the cytoplasm. Functionally, associates with the EF-Tu.GDP complex and induces the exchange of GDP to GTP. It remains bound to the aminoacyl-tRNA.EF-Tu.GTP complex up to the GTP hydrolysis stage on the ribosome. In Corynebacterium jeikeium (strain K411), this protein is Elongation factor Ts.